We begin with the raw amino-acid sequence, 528 residues long: Na(+)/H(+) antiporter NhaB (528 aa).

The next 11 membrane-spanning stretches (helical) occupy residues 23 to 43 (VAIIAFLIINPIVFFLIDPFV), 45 to 65 (GWLLVAEFIFTLAMALKCYPL), 90 to 110 (LVANIEVLLLLVFMVAGIYFM), 136 to 156 (CFAAAFLSAFLDALTVIAVVI), 204 to 224 (LLMHAGVGTALGGVTTMVGEP), 242 to 262 (IRMAPVTLPVFFCGLITCAIV), 305 to 325 (GLIAVWLIAALALHLAAVGLI), 350 to 370 (EEALPFTALLAVFFAVVAVII), 392 to 412 (LALFYVANGLLSMVSDNVFVG), 450 to 470 (ATPNGQAAFLFLLTSALAPLI), and 479 to 499 (IMALPYTIVLAIVGLMGIMFF).

This sequence belongs to the NhaB Na(+)/H(+) (TC 2.A.34) antiporter family.

The protein localises to the cell inner membrane. It carries out the reaction 2 Na(+)(in) + 3 H(+)(out) = 2 Na(+)(out) + 3 H(+)(in). Functionally, na(+)/H(+) antiporter that extrudes sodium in exchange for external protons. This Vibrio campbellii (strain ATCC BAA-1116) protein is Na(+)/H(+) antiporter NhaB.